The primary structure comprises 502 residues: Sodium/proline symporter (502 aa).

Residues 1–5 (MAIST) are Periplasmic-facing. A helical membrane pass occupies residues 6–26 (PMLVTFCVYIFGMILIGFIAW). Residues 27–41 (RSTKNFDDYILGGRS) lie on the Cytoplasmic side of the membrane. 2 hydrophilic regions span residues 27 to 66 (RSTK…GLPG) and 88 to 124 (INWK…KSRI). Residues 42–62 (LGPFVTALSAGASDMSGWLLM) form a helical membrane-spanning segment. Residues 63-67 (GLPGA) are Periplasmic-facing. A helical transmembrane segment spans residues 68–88 (VFLSGISESWIAIGLTLGAWI). At 89-126 (NWKLVAGRLRVHTEYNNNALTLPDYFTGRFEDKSRILR) the chain is on the cytoplasmic side. The chain crosses the membrane as a helical span at residues 127 to 147 (IISALVILLFFTIYCASGIVA). Topologically, residues 148–162 (GARLFESTFGMSYET) are periplasmic. The segment at 151–162 (LFESTFGMSYET) is hydrophilic. The chain crosses the membrane as a helical span at residues 163 to 183 (ALWAGAAATILYTFIGGFLAV). Residues 184–192 (SWTDTVQAS) are Cytoplasmic-facing. The segment at 185-189 (WTDTV) is hydrophilic. The helical transmembrane segment at 193-213 (LMIFALILTPVIVIISVGGFG) threads the bilayer. Hydrophilic stretches follow at residues 214–231 (DSLE…DMLK), 249–274 (FGQP…RRIS), and 296–319 (FNDH…ELAQ). Residues 214–234 (DSLEVIKQKSIENVDMLKGLN) are Periplasmic-facing. The chain crosses the membrane as a helical span at residues 235-255 (FVAIISLMGWGLGYFGQPHIL). Over 256 to 275 (ARFMAADSHHSIVHARRISM) the chain is Cytoplasmic. A helical transmembrane segment spans residues 276–296 (TWMILCLAGAVAVGFFGIAYF). At 297–319 (NDHPALAGAVNQNAERVFIELAQ) the chain is on the periplasmic side. Residues 320 to 340 (ILFNPWIAGILLSAILAAVMS) traverse the membrane as a helical segment. Over 341 to 370 (TLSCQLLVCSSAITEDLYKAFLRKHASQKE) the chain is Cytoplasmic. Residues 341-370 (TLSCQLLVCSSAITEDLYKAFLRKHASQKE) are hydrophilic. The chain crosses the membrane as a helical span at residues 371 to 391 (LVWVGRVMVLVVALVAIALAA). At 392 to 397 (NPENRV) the chain is on the periplasmic side. The interval 392-397 (NPENRV) is hydrophilic. A helical transmembrane segment spans residues 398–418 (LGLVSYAWAGFGAAFGPVVLF). The Cytoplasmic portion of the chain corresponds to 419-427 (SVMWSRMTR). Hydrophilic stretches follow at residues 424–430 (RMTRNGA) and 446–448 (QFG). The next 2 membrane-spanning stretches (helical) occupy residues 428–448 (NGAL…KQFG) and 449–469 (WLGL…IVVF). Topologically, residues 470-502 (SLLGKAPSAAMQKRFAEADAHYHSAPPSRLQES) are cytoplasmic. A hydrophilic region spans residues 476-502 (PSAAMQKRFAEADAHYHSAPPSRLQES).

It belongs to the sodium:solute symporter (SSF) (TC 2.A.21) family. Has been isolated from inner membrane preparations as a homodimer.

It localises to the cell inner membrane. The catalysed reaction is L-proline(in) + Na(+)(in) = L-proline(out) + Na(+)(out). Activity is stimulated by phosphatidylethanolamine and phosphatidylglycerol, but not by phosphatidylcholine and cardiolipin. Proline uptake is inhibited by the sulfhydryl reagent N-ethylmaleimide (NEM). Proline, in the presence of Na(+) or Li(+), protects the carrier functions from NEM-inactivation. Catalyzes the sodium-dependent uptake of extracellular L-proline. This protein is also capable of using lithium as the transport cation. Also catalyzes the uptake of propionate. The sequence is that of Sodium/proline symporter (putP) from Escherichia coli (strain K12).